The chain runs to 281 residues: Type VI secretion system accessory component TagJ (281 aa).

As to quaternary structure, interacts with TssB1 (via N-terminus). Interacts with ClpV1.

In terms of biological role, component of the H1 type VI (H1-T6SS) secretion system that plays a role in the release of toxins targeting both eukaryotic and prokaryotic species. Forms a stable complex with TssB1. This complex, although not crucial for the H1-T6SS function, may fine-tune the assembly of the system. Plays a role in the interaction between ClpV1 and the TssC1/TssB1 sheath. The sequence is that of Type VI secretion system accessory component TagJ from Pseudomonas aeruginosa (strain ATCC 15692 / DSM 22644 / CIP 104116 / JCM 14847 / LMG 12228 / 1C / PRS 101 / PAO1).